A 421-amino-acid polypeptide reads, in one-letter code: 4-hydroxy-3-methylbut-2-en-1-yl diphosphate synthase (flavodoxin) (421 aa).

[4Fe-4S] cluster-binding residues include Cys-300, Cys-303, Cys-346, and Glu-353.

This sequence belongs to the IspG family. It depends on [4Fe-4S] cluster as a cofactor.

The catalysed reaction is (2E)-4-hydroxy-3-methylbut-2-enyl diphosphate + oxidized [flavodoxin] + H2O + 2 H(+) = 2-C-methyl-D-erythritol 2,4-cyclic diphosphate + reduced [flavodoxin]. Its pathway is isoprenoid biosynthesis; isopentenyl diphosphate biosynthesis via DXP pathway; isopentenyl diphosphate from 1-deoxy-D-xylulose 5-phosphate: step 5/6. Functionally, converts 2C-methyl-D-erythritol 2,4-cyclodiphosphate (ME-2,4cPP) into 1-hydroxy-2-methyl-2-(E)-butenyl 4-diphosphate. This is 4-hydroxy-3-methylbut-2-en-1-yl diphosphate synthase (flavodoxin) from Laribacter hongkongensis (strain HLHK9).